A 557-amino-acid polypeptide reads, in one-letter code: Dihydroxy-acid dehydratase (557 aa).

Mg(2+) is bound at residue D78. C119 provides a ligand contact to [2Fe-2S] cluster. The Mg(2+) site is built by D120 and K121. K121 is subject to N6-carboxylysine. C192 serves as a coordination point for [2Fe-2S] cluster. A Mg(2+)-binding site is contributed by E442. The active-site Proton acceptor is S468.

Belongs to the IlvD/Edd family. Homodimer. It depends on [2Fe-2S] cluster as a cofactor. Requires Mg(2+) as cofactor.

It carries out the reaction (2R)-2,3-dihydroxy-3-methylbutanoate = 3-methyl-2-oxobutanoate + H2O. The catalysed reaction is (2R,3R)-2,3-dihydroxy-3-methylpentanoate = (S)-3-methyl-2-oxopentanoate + H2O. It participates in amino-acid biosynthesis; L-isoleucine biosynthesis; L-isoleucine from 2-oxobutanoate: step 3/4. The protein operates within amino-acid biosynthesis; L-valine biosynthesis; L-valine from pyruvate: step 3/4. Functions in the biosynthesis of branched-chain amino acids. Catalyzes the dehydration of (2R,3R)-2,3-dihydroxy-3-methylpentanoate (2,3-dihydroxy-3-methylvalerate) into 2-oxo-3-methylpentanoate (2-oxo-3-methylvalerate) and of (2R)-2,3-dihydroxy-3-methylbutanoate (2,3-dihydroxyisovalerate) into 2-oxo-3-methylbutanoate (2-oxoisovalerate), the penultimate precursor to L-isoleucine and L-valine, respectively. The polypeptide is Dihydroxy-acid dehydratase (Bacillus cereus (strain Q1)).